The chain runs to 469 residues: Probable acetate kinase (469 aa).

Mg(2+) is bound at residue Asn30. Position 37 (Lys37) interacts with ATP. Arg122 contributes to the substrate binding site. The active-site Proton donor/acceptor is Asp179. His239–Gly243 lines the ATP pocket. Residue Glu453 coordinates Mg(2+).

The protein belongs to the acetokinase family. The cofactor is Mg(2+).

It carries out the reaction acetate + ATP = acetyl phosphate + ADP. It participates in metabolic intermediate biosynthesis; acetyl-CoA biosynthesis; acetyl-CoA from acetate: step 1/2. The chain is Probable acetate kinase from Neurospora crassa (strain ATCC 24698 / 74-OR23-1A / CBS 708.71 / DSM 1257 / FGSC 987).